Here is a 410-residue protein sequence, read N- to C-terminus: Segmentation protein fushi tarazu (410 aa).

Disordered stretches follow at residues 71 to 93, 138 to 157, and 175 to 221; these read TQTV…KAED, PAVS…QEYV, and SPQS…SAVS. Residues 76–85 are compositionally biased toward pro residues; that stretch reads PVQPTTPPPK. Residues 190–199 show a composition bias toward pro residues; it reads TPPPTTPTSL. The segment at residues 254 to 313 is a DNA-binding region (homeobox); it reads SKRTRQTYTRYQTLELEKEFHFNRYITRRRRIDIANALSLSERQIKIWFQNRRMKSKKDR.

This sequence belongs to the Antp homeobox family. Phosphorylated at as many as 16 sites. Expressed early in development in a striped pattern at the blastoderm stage. Later expressed in a specific subset of neuronal precursor cells, neurons and glia in the developing CNS. Between 5 and 6 hours of development, found in the midline precursor-2 cells in a segmentally repeating pattern. Expression in many other neuronal precursors follows and reaches a second peak of abundance at 9 hours of development. Expressed in the hindgut between 11-15 hours of development.

The protein resides in the nucleus. Its function is as follows. May play a role in determining neuronal identity, may be directly involved in specifying identity of individual neurons. Required during embryogenesis for the process of body segmentation. Homeotic protein, required in alternating segment primordia, it specifies the correct number of segments. This Drosophila melanogaster (Fruit fly) protein is Segmentation protein fushi tarazu (ftz).